We begin with the raw amino-acid sequence, 275 residues long: Digeranylgeranylglyceryl phosphate synthase (275 aa).

The next 8 membrane-spanning stretches (helical) occupy residues 12-32 (VHNV…ATTW), 35-55 (TPLF…GYVI), 88-108 (IVLF…PFGF), 125-145 (KLGL…AYYG), 146-166 (GLAS…IFFF), 200-220 (WIIA…PYFL), 224-244 (VIYL…LILH), and 255-275 (SLMK…SLRI).

Belongs to the UbiA prenyltransferase family. DGGGP synthase subfamily. Mg(2+) is required as a cofactor.

It localises to the cell membrane. It catalyses the reaction sn-3-O-(geranylgeranyl)glycerol 1-phosphate + (2E,6E,10E)-geranylgeranyl diphosphate = 2,3-bis-O-(geranylgeranyl)-sn-glycerol 1-phosphate + diphosphate. The protein operates within membrane lipid metabolism; glycerophospholipid metabolism. In terms of biological role, prenyltransferase that catalyzes the transfer of the geranylgeranyl moiety of geranylgeranyl diphosphate (GGPP) to the C2 hydroxyl of (S)-3-O-geranylgeranylglyceryl phosphate (GGGP). This reaction is the second ether-bond-formation step in the biosynthesis of archaeal membrane lipids. This Sulfolobus acidocaldarius (strain ATCC 33909 / DSM 639 / JCM 8929 / NBRC 15157 / NCIMB 11770) protein is Digeranylgeranylglyceryl phosphate synthase.